The chain runs to 102 residues: Hypersensitivity to hygromycin-B protein 1 (102 aa).

A signal peptide spans 1-17 (MSLSFLLFSPFLPPCFS). Residues 18 to 38 (SISICLSVLSTVSFFFAFTIP) traverse the membrane as a helical segment. The Cytoplasmic segment spans residues 39 to 69 (HYVLRCGSVDEWHIHSSAEDFRTQRCVCAVK). A helical transmembrane segment spans residues 70–90 (LSASLLGCLLACASWSLLLEV). Residues 91–102 (SRIKWHVGTAYS) lie on the Extracellular side of the membrane.

It localises to the membrane. Its function is as follows. Involved in vacuolar trafficking. This chain is Hypersensitivity to hygromycin-B protein 1, found in Saccharomyces cerevisiae (strain ATCC 204508 / S288c) (Baker's yeast).